Here is a 502-residue protein sequence, read N- to C-terminus: Probable cytosol aminopeptidase (502 aa).

Mn(2+) contacts are provided by Lys267 and Asp272. Lys279 is a catalytic residue. The Mn(2+) site is built by Asp290, Asp349, and Glu351. Arg353 is an active-site residue.

The protein belongs to the peptidase M17 family. Mn(2+) serves as cofactor.

It localises to the cytoplasm. The enzyme catalyses Release of an N-terminal amino acid, Xaa-|-Yaa-, in which Xaa is preferably Leu, but may be other amino acids including Pro although not Arg or Lys, and Yaa may be Pro. Amino acid amides and methyl esters are also readily hydrolyzed, but rates on arylamides are exceedingly low.. The catalysed reaction is Release of an N-terminal amino acid, preferentially leucine, but not glutamic or aspartic acids.. Presumably involved in the processing and regular turnover of intracellular proteins. Catalyzes the removal of unsubstituted N-terminal amino acids from various peptides. The polypeptide is Probable cytosol aminopeptidase (Aeromonas salmonicida (strain A449)).